Reading from the N-terminus, the 317-residue chain is Methionyl-tRNA formyltransferase (317 aa).

112-115 (SLLP) lines the (6S)-5,6,7,8-tetrahydrofolate pocket.

Belongs to the Fmt family.

The enzyme catalyses L-methionyl-tRNA(fMet) + (6R)-10-formyltetrahydrofolate = N-formyl-L-methionyl-tRNA(fMet) + (6S)-5,6,7,8-tetrahydrofolate + H(+). Functionally, attaches a formyl group to the free amino group of methionyl-tRNA(fMet). The formyl group appears to play a dual role in the initiator identity of N-formylmethionyl-tRNA by promoting its recognition by IF2 and preventing the misappropriation of this tRNA by the elongation apparatus. The protein is Methionyl-tRNA formyltransferase of Geobacter sulfurreducens (strain ATCC 51573 / DSM 12127 / PCA).